The primary structure comprises 219 residues: MEMILNNTEARVLGCLIEKEMTTPEYYPLSLNALANACNQKSNRNPVMGMDETVVAAALDGLRFKQLAVLAADGGRVAKYRHLLAEKLGLLPPELAVVCELLLRGPQTLGELRTRAERMHPFADLAGVEAVLRELMERGEPLVTRLARQAGRKEARYAHLLGGDIQGDAEERMFDAEGPCTEMTGGDDRIARLEEQVTSLREEVAMLRRVVDDFKGQFE.

Belongs to the UPF0502 family.

This chain is UPF0502 protein Ppro_2903, found in Pelobacter propionicus (strain DSM 2379 / NBRC 103807 / OttBd1).